The following is a 443-amino-acid chain: Probable glycine dehydrogenase (decarboxylating) subunit 1 (443 aa).

This sequence belongs to the GcvP family. N-terminal subunit subfamily. In terms of assembly, the glycine cleavage system is composed of four proteins: P, T, L and H. In this organism, the P 'protein' is a heterodimer of two subunits.

It catalyses the reaction N(6)-[(R)-lipoyl]-L-lysyl-[glycine-cleavage complex H protein] + glycine + H(+) = N(6)-[(R)-S(8)-aminomethyldihydrolipoyl]-L-lysyl-[glycine-cleavage complex H protein] + CO2. In terms of biological role, the glycine cleavage system catalyzes the degradation of glycine. The P protein binds the alpha-amino group of glycine through its pyridoxal phosphate cofactor; CO(2) is released and the remaining methylamine moiety is then transferred to the lipoamide cofactor of the H protein. This chain is Probable glycine dehydrogenase (decarboxylating) subunit 1, found in Nitratidesulfovibrio vulgaris (strain DSM 19637 / Miyazaki F) (Desulfovibrio vulgaris).